Here is a 557-residue protein sequence, read N- to C-terminus: Myo-inositol transporter 2 (557 aa).

Residues 1 to 76 (MDFNNIPLAT…ENGEGFEAEK (76 aa)) lie on the Cytoplasmic side of the membrane. Residues 24-69 (EMTTRPSETKKKVPFSEDMREIPSLPNEEEANATDPQANEVADENG) are disordered. Residues 30-44 (SETKKKVPFSEDMRE) are compositionally biased toward basic and acidic residues. A helical membrane pass occupies residues 77–97 (ISSWIWVLSAVAGISGLLFGY). Residues 98–99 (DT) are Extracellular-facing. Residues 100–120 (GVISGALAVLGSDLGHVLSSG) traverse the membrane as a helical segment. Topologically, residues 121–123 (QKE) are cytoplasmic. A helical transmembrane segment spans residues 124–144 (LITSATSFAALISATTSGWLA). Residues 145-157 (DWVGRKRLLLCAD) are Extracellular-facing. Residues 158–178 (AIFVIGSVIMAASRNVAMMVV) traverse the membrane as a helical segment. At 179 to 180 (GR) the chain is on the cytoplasmic side. The chain crosses the membrane as a helical span at residues 181 to 201 (FIVGYGIGLTSLIVPMYITEL). Topologically, residues 202-209 (APARLRGR) are extracellular. A helical transmembrane segment spans residues 210-230 (LVIIYVVFITGGQLIAYSLNA). Topologically, residues 231–240 (AFEHVHQGWR) are cytoplasmic. The chain crosses the membrane as a helical span at residues 241–261 (IMFGIGAAPALGQLISLFWTP). Topologically, residues 262–367 (ESPRYLLRHN…IFQSVGFKNS (106 aa)) are extracellular. A helical transmembrane segment spans residues 368-388 (ISVSIVVGATNFVFTIVAFMF). At 389-396 (IDRIGRRR) the chain is on the cytoplasmic side. A helical transmembrane segment spans residues 397–417 (ILLCTSAVMIAGLALCAIAYH). Topologically, residues 418–432 (FLPADTTQNTNSGWQ) are extracellular. A helical transmembrane segment spans residues 433 to 453 (YVVLASIIIFLASYASGIGNI). At 454-468 (PWQQAELFPMEVRAL) the chain is on the cytoplasmic side. Residues 469–489 (GAGFSTAINWVGNLIISASFL) form a helical membrane-spanning segment. The Extracellular portion of the chain corresponds to 490 to 498 (TMMESITPT). A helical transmembrane segment spans residues 499–519 (GTFALFAGFCFVGLVTSYFTY). At 520-557 (PELAGMSIENIHKLLEKGFWQAVKESTKRVRKGRIDEA) the chain is on the cytoplasmic side.

This sequence belongs to the major facilitator superfamily. Sugar transporter (TC 2.A.1.1) family.

It is found in the membrane. It carries out the reaction myo-inositol(out) + H(+)(out) = myo-inositol(in) + H(+)(in). Functionally, transporter for myo-inositol. In Schizosaccharomyces pombe (strain 972 / ATCC 24843) (Fission yeast), this protein is Myo-inositol transporter 2 (itr2).